The following is a 262-amino-acid chain: Glutamate racemase (262 aa).

Residues 7-8 (DS) and 39-40 (YG) contribute to the substrate site. Residue Cys70 is the Proton donor/acceptor of the active site. Residue 71–72 (NT) coordinates substrate. Cys182 serves as the catalytic Proton donor/acceptor. 183-184 (TH) contributes to the substrate binding site.

Belongs to the aspartate/glutamate racemases family.

It carries out the reaction L-glutamate = D-glutamate. It functions in the pathway cell wall biogenesis; peptidoglycan biosynthesis. Its function is as follows. Provides the (R)-glutamate required for cell wall biosynthesis. In Campylobacter concisus (strain 13826), this protein is Glutamate racemase.